The following is a 99-amino-acid chain: DNA-binding protein HU (99 aa).

The interval Arg-67–Pro-86 is disordered.

It belongs to the bacterial histone-like protein family. In terms of assembly, homodimer.

Its function is as follows. Histone-like DNA-binding protein which is capable of wrapping DNA to stabilize it, and thus to prevent its denaturation under extreme environmental conditions. This chain is DNA-binding protein HU (hup), found in Rickettsia felis (strain ATCC VR-1525 / URRWXCal2) (Rickettsia azadi).